A 268-amino-acid chain; its full sequence is Phosphatidylglycerol--prolipoprotein diacylglyceryl transferase (268 aa).

4 helical membrane-spanning segments follow: residues 14 to 34 (LGPI…FAGW), 57 to 77 (LTFY…IIFY), 90 to 110 (FFLW…LIAF), and 117 to 137 (IGAN…IGLG). Arg140 is an a 1,2-diacyl-sn-glycero-3-phospho-(1'-sn-glycerol) binding site. A run of 3 helical transmembrane segments spans residues 174–194 (QLFE…LVTI), 200–220 (YLVL…CEFF), and 238–258 (GQIL…AVFI).

The protein belongs to the Lgt family.

The protein resides in the cell inner membrane. It catalyses the reaction L-cysteinyl-[prolipoprotein] + a 1,2-diacyl-sn-glycero-3-phospho-(1'-sn-glycerol) = an S-1,2-diacyl-sn-glyceryl-L-cysteinyl-[prolipoprotein] + sn-glycerol 1-phosphate + H(+). Its pathway is protein modification; lipoprotein biosynthesis (diacylglyceryl transfer). Catalyzes the transfer of the diacylglyceryl group from phosphatidylglycerol to the sulfhydryl group of the N-terminal cysteine of a prolipoprotein, the first step in the formation of mature lipoproteins. The polypeptide is Phosphatidylglycerol--prolipoprotein diacylglyceryl transferase (Francisella tularensis subsp. holarctica (strain FTNF002-00 / FTA)).